A 1360-amino-acid chain; its full sequence is Ubiquitin carboxyl-terminal hydrolase 19 (1360 aa).

The segment at 1–46 is disordered; the sequence is MSAGASATGPRRGPPGLEEATSKKKQKDRANLESKDGDARRVSLPR. Topologically, residues 1–1333 are cytoplasmic; sequence MSAGASATGP…TTPDEGCLRY (1333 aa). Residues 28–46 show a composition bias toward basic and acidic residues; the sequence is DRANLESKDGDARRVSLPR. Residues 51–140 enclose the CS 1 domain; it reads KDELLLDWRQ…VPLLTWPSLL (90 aa). Residues 163–239 are disordered; that stretch reads PIALEPGSEP…APSFLSDSAT (77 aa). The span at 170–181 shows a compositional bias: basic and acidic residues; that stretch reads SEPRRAKQEARN. Residues 189 to 199 are compositionally biased toward gly residues; it reads GEVGSGAGPGT. Ser-220 carries the phosphoserine modification. The 103-residue stretch at 322–424 folds into the CS 2 domain; that stretch reads LAFVKNDSYE…RQSQRWGGLE (103 aa). Positions 432–482 are disordered; the sequence is VGGAKVAVPTGPTPLDSTPPGGGPHPLTGQEEARAVEKEKPKARSEDSGLD. Over residues 462–478 the composition is skewed to basic and acidic residues; sequence EEARAVEKEKPKARSED. In terms of domain architecture, USP spans 539 to 1256; it reads TGLVNLGNTC…YAYVLFYRRR (718 aa). The Nucleophile role is filled by Cys-548. Cys-833, Cys-836, Cys-850, Cys-853, Cys-859, Cys-863, His-871, and Cys-875 together coordinate Zn(2+). The MYND-type zinc finger occupies 833–875; the sequence is CAACQRKQQSEEEKLKRCTRCYRVGYCNQFCQKTHWPDHKGLC. The segment at 965–988 is disordered; it reads DTGAHRVWPPADRGPVPSTSGLSS. His-1207 acts as the Proton acceptor in catalysis. Residues 1259–1274 are compositionally biased toward basic and acidic residues; sequence PVERPPRASHSEHHPD. Residues 1259–1281 form a disordered region; it reads PVERPPRASHSEHHPDLGPAAEA. The chain crosses the membrane as a helical span at residues 1334–1354; the sequence is FVLGTVAALVALVLNVFYPLV. The Lumenal portion of the chain corresponds to 1355 to 1360; that stretch reads SQSRWR.

As to quaternary structure, interacts with RNF123. Interacts with BIRC2/c-IAP1, BIRC3/c-IAP2 and XIAP/BIRC4. Interacts with HIF1A (via N-terminus).

Its subcellular location is the endoplasmic reticulum membrane. The enzyme catalyses Thiol-dependent hydrolysis of ester, thioester, amide, peptide and isopeptide bonds formed by the C-terminal Gly of ubiquitin (a 76-residue protein attached to proteins as an intracellular targeting signal).. Deubiquitinating enzyme that regulates the degradation of various proteins by removing ubiquitin moieties, thereby preventing their proteasomal degradation. Stabilizes RNF123, which promotes CDKN1B degradation and contributes to cell proliferation. Decreases the levels of ubiquitinated proteins during skeletal muscle formation and acts to repress myogenesis. Modulates transcription of major myofibrillar proteins. Also involved in turnover of endoplasmic-reticulum-associated degradation (ERAD) substrates. Mechanistically, deubiquitinates and thereby stabilizes several E3 ligases involved in the ERAD pathway including SYVN1 or MARCHF6. Regulates the stability of other E3 ligases including BIRC2/c-IAP1 and BIRC3/c-IAP2 by preventing their ubiquitination. Required for cells to mount an appropriate response to hypoxia by rescuing HIF1A from degradation in a non-catalytic manner and by mediating the deubiquitination of FUNDC1. Attenuates mitochondrial damage and ferroptosis by targeting and stabilizing NADPH oxidase 4/NOX4. Negatively regulates TNF-alpha- and IL-1beta-triggered NF-kappa-B activation by hydrolyzing 'Lys-27'- and 'Lys-63'-linked polyubiquitin chains from MAP3K7. Modulates also the protein level and aggregation of polyQ-expanded huntingtin/HTT through HSP90AA1. This is Ubiquitin carboxyl-terminal hydrolase 19 (Usp19) from Mus musculus (Mouse).